A 97-amino-acid chain; its full sequence is Large ribosomal subunit protein eL21 (97 aa).

The protein belongs to the eukaryotic ribosomal protein eL21 family.

The chain is Large ribosomal subunit protein eL21 from Methanococcoides burtonii (strain DSM 6242 / NBRC 107633 / OCM 468 / ACE-M).